Reading from the N-terminus, the 1352-residue chain is Stress response protein NST1 (1352 aa).

The span at 1–12 (MSSKSQQPPTGL) shows a compositional bias: polar residues. Disordered stretches follow at residues 1–66 (MSSK…FFNF), 216–422 (NANA…TQSS), 503–522 (NGLR…VEVD), 531–616 (DHRA…FLSF), 651–693 (RRSV…AEEG), 726–880 (LREL…IAKE), 978–1118 (GLKS…DDAF), 1139–1275 (GSLI…GAGV), and 1307–1336 (GGTA…HQQQ). Residues 16-25 (AAKKRAKKAA) show a composition bias toward basic residues. Residues 26 to 45 (KQSQNPQPQSAPQTSSQTPA) are compositionally biased toward low complexity. A compositionally biased stretch (pro residues) spans 46 to 59 (SVPPLPPASVPDPL). A compositionally biased stretch (polar residues) spans 218–229 (NARSFPSPQQTI). Positions 242-254 (REEEYDDEEEIEE) are enriched in acidic residues. Over residues 268 to 277 (KKNKKKKKKG) the composition is skewed to basic residues. Residues 287–300 (VEPPAPLPPLPPPS) are compositionally biased toward pro residues. Over residues 317–330 (LPTHQPQPLSQQPP) the composition is skewed to low complexity. Pro residues predominate over residues 331–349 (SLNPLPPPAPASAPTPTPP). Positions 368–388 (PARSARAAGKAPASAAPPHNA) are enriched in low complexity. A compositionally biased stretch (basic and acidic residues) spans 531-541 (DHRAPELHDHD). Positions 542 to 583 (PDDLDGEESEEYDDDDDYADDDELDDDDIGTDEADVGDEIDE) are enriched in acidic residues. Basic and acidic residues predominate over residues 653–664 (SVREEQNLRDMQ). Positions 665–680 (EETDEEEEEEDDDESR) are enriched in acidic residues. 3 stretches are compositionally biased toward basic and acidic residues: residues 681–693 (DEPM…AEEG), 726–749 (LREL…EAQK), and 759–880 (QKAE…IAKE). A coiled-coil region spans residues 712-943 (AYRERVAKQR…AAQQAQRERA (232 aa)). Over residues 1008 to 1020 (TNATPGRSMQKTP) the composition is skewed to polar residues. Over residues 1153–1164 (PTPPAPIAPPNL) the composition is skewed to pro residues. 2 stretches are compositionally biased toward polar residues: residues 1173–1186 (SDGQ…LRST) and 1208–1219 (QPQQRRPTTSWD).

The protein belongs to the NST1 family.

The protein localises to the cytoplasm. Its function is as follows. May act as a negative regulator of salt tolerance. The protein is Stress response protein NST1 (NST1) of Cryptococcus neoformans var. neoformans serotype D (strain JEC21 / ATCC MYA-565) (Filobasidiella neoformans).